The following is a 570-amino-acid chain: D-xylulose kinase A (570 aa).

Residues His-95, Arg-166, Asp-282, and Asn-283 each contribute to the substrate site. Residues Trp-364, 469–470 (GG), and Asn-473 contribute to the ATP site.

The protein belongs to the FGGY kinase family.

The protein localises to the cytoplasm. It carries out the reaction D-xylulose + ATP = D-xylulose 5-phosphate + ADP + H(+). Highly specific D-xylulose kinase which participates in the catabolism of xylose. Xylose is a major component of hemicelluloses such as xylan. Most fungi utilize D-xylose via three enzymatic reactions, xylose reductase (XR), xylitol dehydrogenase (XDH), and xylulokinase, to form xylulose 5-phosphate, which enters pentose phosphate pathway. This chain is D-xylulose kinase A (xkiA), found in Aspergillus niger.